Consider the following 473-residue polypeptide: Argininosuccinate lyase (473 aa).

2-(N(omega)-L-arginino)succinate contacts are provided by S34, N121, and T166. Residue H167 is the Proton acceptor of the active site. The active-site Proton donor is the S289. 2-(N(omega)-L-arginino)succinate is bound by residues N297, Y329, and Q334.

This sequence belongs to the lyase 1 family. Argininosuccinate lyase subfamily.

The enzyme catalyses 2-(N(omega)-L-arginino)succinate = fumarate + L-arginine. It participates in amino-acid biosynthesis; L-arginine biosynthesis; L-arginine from L-ornithine and carbamoyl phosphate: step 3/3. In Chlamydomonas reinhardtii (Chlamydomonas smithii), this protein is Argininosuccinate lyase (ARG7).